The following is a 416-amino-acid chain: Calreticulin (416 aa).

Positions 1–17 are cleaved as a signal peptide; the sequence is MLLSVPLLLGLLGLAAA. Residues 18–197 are N-domain; that stretch reads DPAIYFKEQF…NSQVESGSLE (180 aa). Gln26 is a binding site for Ca(2+). The residue at position 48 (Lys48) is an N6-acetyllysine. Positions 62 and 64 each coordinate Ca(2+). The residue at position 64 (Lys64) is an N6-(2-hydroxyisobutyryl)lysine. Cys105 and Cys137 are disulfide-bonded. The an alpha-D-glucoside site is built by Tyr109, Lys111, Tyr128, and Asp135. At Lys159 the chain carries N6-acetyllysine. A 1-1 repeat occupies 191–202; sequence VESGSLEDDWDF. Residues 191-255 form a 4 X approximate repeats region; sequence VESGSLEDDW…DAKKPEDWDE (65 aa). The segment at 193-277 is disordered; sequence SGSLEDDWDF…NPEYKGEWKP (85 aa). The P-domain stretch occupies residues 198–308; it reads DDWDFLPPKK…YSPDANIYAY (111 aa). The span at 207–251 shows a compositional bias: basic and acidic residues; sequence KIKDPDAAKPEDWDERAKIDDPTDSKPEDWDKPEHIPDPDAKKPE. An N6-acetyllysine modification is found at Lys209. 6 repeat units span residues 210–221, 227–238, 244–255, 259–269, 273–283, and 287–297. The tract at residues 237–270 is interaction with PPIB; it reads DKPEHIPDPDAKKPEDWDEEMDGEWEPPVIQNPE. The span at 252–261 shows a compositional bias: acidic residues; it reads DWDEEMDGEW. Residues 259-297 are 3 X approximate repeats; the sequence is GEWEPPVIQNPEYKGEWKPRQIDNPDYKGTWIHPEIDNP. The tract at residues 309–416 is C-domain; the sequence is DSFAVLGLDL…ESPGQAKDEL (108 aa). Position 317 (Asp317) interacts with an alpha-D-glucoside. Asp328 contacts Ca(2+). The interval 350–416 is disordered; the sequence is TKAAEKQMKD…ESPGQAKDEL (67 aa). A compositionally biased stretch (basic and acidic residues) spans 352-379; sequence AAEKQMKDKQDEEQRLKEEEEDKKRKEE. The span at 380–408 shows a compositional bias: acidic residues; the sequence is EEAEDKEDDDDRDEDEDEEDEKEEDEEES. A Prevents secretion from ER motif is present at residues 413 to 416; it reads KDEL.

Belongs to the calreticulin family. In terms of assembly, monomer. Interacts with GABARAP, NR3C1, PDIA3/ERp57 and TRIM21. Interacts (via P-domain) with PDIA5. Interacts with PPIB. Interacts with SPACA9. Component of an EIF2 complex at least composed of CELF1/CUGBP1, CALR, CALR3, EIF2S1, EIF2S2, HSP90B1 and HSPA5. Interacts with CLCC1.

It localises to the endoplasmic reticulum lumen. The protein resides in the cytoplasm. It is found in the cytosol. The protein localises to the cytolytic granule. Its subcellular location is the secreted. It localises to the extracellular space. The protein resides in the extracellular matrix. It is found in the cell surface. The protein localises to the sarcoplasmic reticulum lumen. Its subcellular location is the cytoplasmic vesicle. It localises to the secretory vesicle. The protein resides in the cortical granule. Calcium-binding chaperone that promotes folding, oligomeric assembly and quality control in the endoplasmic reticulum (ER) via the calreticulin/calnexin cycle. This lectin interacts transiently with almost all of the monoglucosylated glycoproteins that are synthesized in the ER. Interacts with the DNA-binding domain of NR3C1 and mediates its nuclear export. Involved in maternal gene expression regulation. May participate in oocyte maturation via the regulation of calcium homeostasis. Present in the cortical granules of non-activated oocytes, is exocytosed during the cortical reaction in response to oocyte activation and might participate in the block to polyspermy. In Mus musculus (Mouse), this protein is Calreticulin (Calr).